We begin with the raw amino-acid sequence, 270 residues long: Pyrroline-5-carboxylate reductase (270 aa).

This sequence belongs to the pyrroline-5-carboxylate reductase family.

The protein resides in the cytoplasm. The catalysed reaction is L-proline + NADP(+) = (S)-1-pyrroline-5-carboxylate + NADPH + 2 H(+). It catalyses the reaction L-proline + NAD(+) = (S)-1-pyrroline-5-carboxylate + NADH + 2 H(+). The protein operates within amino-acid biosynthesis; L-proline biosynthesis; L-proline from L-glutamate 5-semialdehyde: step 1/1. Catalyzes the reduction of 1-pyrroline-5-carboxylate (PCA) to L-proline. This Corynebacterium melassecola protein is Pyrroline-5-carboxylate reductase.